The sequence spans 185 residues: uncharacterized protein (185 aa).

This is an uncharacterized protein from Magallana gigas (Pacific oyster).